We begin with the raw amino-acid sequence, 564 residues long: Interactor of constitutive active ROPs 3 (564 aa).

2 disordered regions span residues 1–73 (MQTQ…SRIT) and 88–135 (KAKD…SALE). A compositionally biased stretch (polar residues) spans 33 to 44 (ESSSSPISATNR). Composition is skewed to basic and acidic residues over residues 63 to 73 (VSEKKRPSRIT) and 98 to 123 (TSKK…KLEE). Coiled-coil stretches lie at residues 70–133 (SRIT…ETSA) and 231–514 (AETE…AATA). At S533 the chain carries Phosphoserine.

This sequence belongs to the ICR family. As to quaternary structure, interacts with ARAC11 in vitro. As to expression, expressed in flowers.

Functionally, acts as a scaffold, mediating interaction of ROPs with different proteins. In Arabidopsis thaliana (Mouse-ear cress), this protein is Interactor of constitutive active ROPs 3 (ICR3).